Reading from the N-terminus, the 306-residue chain is D-alanine--D-alanine ligase B (306 aa).

Catalysis depends on residues Glu-15 and Ser-150. The ATP-grasp domain maps to 101–303; sequence KLLWQGAGLP…FSQLVVRILE (203 aa). Residue 134–189 coordinates ATP; it reads ISALGLPVIVKPSREGSSVGMSKVVAENALQDALRLAFQHDEEVLIEKWLSGPEFT. Mg(2+) is bound by residues Asp-257, Glu-270, and Asn-272. The active site involves Ser-281.

It belongs to the D-alanine--D-alanine ligase family. In terms of assembly, monomer. Mg(2+) is required as a cofactor. Mn(2+) serves as cofactor.

The protein localises to the cytoplasm. The enzyme catalyses 2 D-alanine + ATP = D-alanyl-D-alanine + ADP + phosphate + H(+). It functions in the pathway cell wall biogenesis; peptidoglycan biosynthesis. In terms of biological role, cell wall formation. This chain is D-alanine--D-alanine ligase B (ddlB), found in Escherichia coli (strain K12).